Consider the following 165-residue polypeptide: LIM domain transcription factor LMO4.2 (165 aa).

LIM zinc-binding domains lie at 21 to 83 (KRCA…LFGN) and 85 to 147 (GACS…ALIN).

Functionally, acts as a positive cofactor of GATA transcription factors to establish the identity of the ventral mesoderm during gastrulation. Down-regulation in the dorsal mesoderm is necessary for the proper formation of this territory since, when present, lmo4 may bind ldb1 and restrict the availability of this cofactor for Spemman organizer transcription factors. At neurula stages, suppresses primary neuron differentiation and modulates gene expression at the Isthmic Organizer of the midbrain-hindbrain boundary. The sequence is that of LIM domain transcription factor LMO4.2 (lmo4.2) from Xenopus tropicalis (Western clawed frog).